The following is a 148-amino-acid chain: Transcription antitermination protein NusB (148 aa).

Belongs to the NusB family.

Involved in transcription antitermination. Required for transcription of ribosomal RNA (rRNA) genes. Binds specifically to the boxA antiterminator sequence of the ribosomal RNA (rrn) operons. The sequence is that of Transcription antitermination protein NusB from Aquifex aeolicus (strain VF5).